Here is a 124-residue protein sequence, read N- to C-terminus: Large ribosomal subunit protein bL20c (124 aa).

Belongs to the bacterial ribosomal protein bL20 family.

Its subcellular location is the plastid. The protein localises to the chloroplast. Its function is as follows. Binds directly to 23S ribosomal RNA and is necessary for the in vitro assembly process of the 50S ribosomal subunit. It is not involved in the protein synthesizing functions of that subunit. The protein is Large ribosomal subunit protein bL20c (rpl20) of Euglena gracilis.